The following is a 1025-amino-acid chain: Rho GTPase-activating protein Graf (1025 aa).

The region spanning 271-388 (IFTKRGYLFL…WISAMDGTEP (118 aa)) is the PH domain. Positions 402 to 589 (YHLDEAGFMF…ILIDNYERIF (188 aa)) constitute a Rho-GAP domain. The disordered stretch occupies residues 824–866 (GSASGPQQHPPVQRGLHSYGQTKHYSPLMPTSTSSSNDSVCDS). A compositionally biased stretch (low complexity) spans 854-866 (TSTSSSNDSVCDS). Positions 963–1023 (TGTARVRTLY…PENYVEHLKP (61 aa)) constitute an SH3 domain.

As to quaternary structure, interacts with Egfr (when ubiquitinated). In terms of tissue distribution, in the adult brain, expressed in the antennal lobe, the subesophageal ganglion and the alpha/beta neurons of the mushroom body.

The protein localises to the cytoplasm. It is found in the cytosol. Its subcellular location is the cytoplasmic vesicle. GTPase-activating protein for Rho family proteins. Essential component of the CLIC (clathrin-independent carrier)/GEEC (GPI-anchored protein-enriched early endocytic compartment) endocytic pathway. During hematopoiesis, inhibits Egfr-ras-MAPK signaling by promoting Spi-induced Egfr internalization through CLIC/GEEC endocytosis, thereby preventing plasmatocyte overproliferation. Essential for normal mushroom body (MB) development and consequently the formation of olfactory long-term memories. During MD development, required to stop the MB beta-lobe from crossing the brain midline, possibly acting via its role in the CLIC/GEEC endocytic pathway to down-regulate the Egfr-ras-MAPK signaling at the tip of the beta-lobes. Required during embryo cellularization for maintaining and regulating the rate of actomyosin ring constriction. During cellularization, inhibits Rho-GTP levels at the furrow canal tip in a spatiotemporal manner, thus delaying the onset of actomyosin contraction and ensuring appropriate closure of the cells at the base of nuclei after membrane extension. In Drosophila melanogaster (Fruit fly), this protein is Rho GTPase-activating protein Graf.